Consider the following 272-residue polypeptide: D-aminoacyl-tRNA deacylase (272 aa).

As to quaternary structure, monomer. Zn(2+) serves as cofactor.

The enzyme catalyses a D-aminoacyl-tRNA + H2O = a tRNA + a D-alpha-amino acid + H(+). The catalysed reaction is glycyl-tRNA(Ala) + H2O = tRNA(Ala) + glycine + H(+). It carries out the reaction D-tyrosyl-tRNA(Tyr) + H2O = D-tyrosine + tRNA(Tyr). Its function is as follows. D-aminoacyl-tRNA deacylase with broad substrate specificity. By recycling D-aminoacyl-tRNA to D-amino acids and free tRNA molecules, this enzyme counteracts the toxicity associated with the formation of D-aminoacyl-tRNA entities in vivo. Catalyzes the hydrolysis of D-tyrosyl-tRNA(Tyr) and D-aspartyl-tRNA(Asp). The protein is D-aminoacyl-tRNA deacylase of Pyrococcus abyssi (strain GE5 / Orsay).